The sequence spans 627 residues: Pheromone B alpha 2 receptor (627 aa).

Topologically, residues 1 to 7 (MLDPTYP) are extracellular. The chain crosses the membrane as a helical span at residues 8-28 (AFPIFAFLGIVCCLVPLPWHL). At 29-35 (QSWNSGT) the chain is on the cytoplasmic side. The chain crosses the membrane as a helical span at residues 36–56 (CFLMIWTAVACLNMFVNSIIW). Residues 57 to 69 (KDHAQNVAPVWCE) are Extracellular-facing. Residues 70-90 (ISIRITLGASVGIPASSLCIV) traverse the membrane as a helical segment. The Cytoplasmic portion of the chain corresponds to 91-102 (RRLYSIAKKFRA). A helical transmembrane segment spans residues 103-123 (VMVDALICVLFPILYIILQIV). Residues 124–150 (VQGHRFNILENIGCFPAIINTPLTYPL) are Extracellular-facing. The chain crosses the membrane as a helical span at residues 151–171 (TFMWPVLIGVISFIYSTLALI). Topologically, residues 172-197 (QFNRHRLQFTQFLHSNSTLSVSRYLR) are cytoplasmic. The helical transmembrane segment at 198–218 (LMALAMTEMMCTTPMGVFVII) threads the bilayer. The Extracellular portion of the chain corresponds to 219-260 (LNAKATPVSPYVSWAVTHYGYGRIDQVPAIIWRSNRLLVASY). A helical transmembrane segment spans residues 261 to 281 (ELTRWSSPAIALIFFFYFGFA). The Cytoplasmic segment spans residues 282–627 (QEARRNYAAA…ASPRTHRASV (346 aa)). 3 disordered regions span residues 363–405 (LPRP…SSPI), 479–505 (TVPQ…SSSA), and 518–627 (LPST…RASV). Low complexity predominate over residues 372 to 387 (SSSGFSSSDSTRFGSS). Composition is skewed to polar residues over residues 519–533 (PSTT…SLPT) and 545–555 (SLSQLFGISSM). The span at 569 to 607 (ATGTASPTTTAPAPASTTIAPASATMAPATTTTAPTTIA) shows a compositional bias: low complexity.

Belongs to the G-protein coupled receptor 4 family.

It localises to the cell membrane. Functionally, receptor for the BAP2 pheromone, a prenylated mating factor. The receptor/pheromone interaction may have a role in the fusion of clamp cells. This Schizophyllum commune (Split gill fungus) protein is Pheromone B alpha 2 receptor (BAR2).